The following is a 684-amino-acid chain: Fermitin family homolog 2 (684 aa).

Residues 40–81 (HIGGVMLKLVEKLDVKKDWSDHALWWEKKKTWLLKTHWTLDK) are interaction with membranes containing phosphatidylinositol phosphate. A disordered region spans residues 141–163 (LRKPRDPKKKKKKLEDAEEETLE). Residues 279–577 (DLNPKYDAIR…SLPEFGITHF (299 aa)) form the FERM domain. One can recognise a PH domain in the interval 378–474 (KVFKPKKLTL…WMAACRLASK (97 aa)). Residue Lys-381 participates in a 1,2-diacyl-sn-glycero-3-phospho-(1D-myo-inositol-3,4,5-trisphosphate) binding.

This sequence belongs to the kindlin family.

The protein resides in the cytoplasm. It is found in the cell cortex. Its subcellular location is the cytoskeleton. It localises to the stress fiber. The protein localises to the cell junction. The protein resides in the focal adhesion. It is found in the membrane. Its subcellular location is the cell projection. It localises to the lamellipodium membrane. The protein localises to the nucleus. The protein resides in the myofibril. It is found in the sarcomere. Its subcellular location is the i band. It localises to the cell surface. Its function is as follows. Scaffolding protein that enhances integrin activation mediated by TLN1 and/or TLN2, but activates integrins only weakly by itself. Binds to membranes enriched in phosphoinositides. Enhances integrin-mediated cell adhesion onto the extracellular matrix and cell spreading; this requires both its ability to interact with integrins and with phospholipid membranes. Required for the assembly of focal adhesions. Participates in the connection between extracellular matrix adhesion sites and the actin cytoskeleton and also in the orchestration of actin assembly and cell shape modulation. Plays a role in the TGFB1 and integrin signaling pathways. Stabilizes active CTNNB1 and plays a role in the regulation of transcription mediated by CTNNB1 and TCF7L2/TCF4 and in Wnt signaling. Required for normal embryonic development, including normal heart morphogenesis and normal angiogenesis. The polypeptide is Fermitin family homolog 2 (fermt2) (Danio rerio (Zebrafish)).